Here is a 369-residue protein sequence, read N- to C-terminus: Short chain dehydrogenase rstn4 (369 aa).

5 residues coordinate NADP(+): lysine 88, aspartate 111, asparagine 138, tyrosine 234, and lysine 238. Catalysis depends on tyrosine 234, which acts as the Proton donor. Lysine 238 acts as the Lowers pKa of active site Tyr in catalysis.

The protein belongs to the short-chain dehydrogenases/reductases (SDR) family.

It functions in the pathway antifungal biosynthesis. In terms of biological role, short chain dehydrogenase; part of the gene cluster that mediates the biosynthesis of the tetrahydropyranyl antifungal agent restricticin that acts as an inhibitor of CYP51 and blocks the ergosterol biosynthesis. The highly reducing polyketide synthase rstn3, the short chain dehydrogenase rstn4, the cyclase rstn5, the FAD-dependent monooxygenase rstn6 and the enoylreductase rstn7 are required to generate the first stable intermediate desmethylrestrictinol. Rstn3 with rstn7 biosynthesize the first polyketide chain intermediate that is reduced by rstn4, followed by epoxidation by rstn6 before 6-endo cyclization via epoxide opening by rstn5 leads to desmethylrestrictinol. The methyltransferase rstn1 then catalyzes the C4 O-methylation of desmethylrestrictinol to produce restrictinol, and the nonribosomal peptide synthetase rstn8 catalyzes the C3 esterification of restrictinol with glycine that leads to restricticin. The protein is Short chain dehydrogenase rstn4 of Aspergillus nomiae NRRL (strain ATCC 15546 / NRRL 13137 / CBS 260.88 / M93).